The sequence spans 178 residues: Large ribosomal subunit protein uL6 (178 aa).

It belongs to the universal ribosomal protein uL6 family. In terms of assembly, part of the 50S ribosomal subunit.

Functionally, this protein binds to the 23S rRNA, and is important in its secondary structure. It is located near the subunit interface in the base of the L7/L12 stalk, and near the tRNA binding site of the peptidyltransferase center. This is Large ribosomal subunit protein uL6 from Helicobacter acinonychis (strain Sheeba).